The chain runs to 324 residues: UDP-N-acetylenolpyruvoylglucosamine reductase (324 aa).

Residues 39-220 (RTGGLAELFY…RAAMHEVALH (182 aa)) enclose the FAD-binding PCMH-type domain. Arg-185 is an active-site residue. Ser-234 functions as the Proton donor in the catalytic mechanism. Glu-304 is an active-site residue.

This sequence belongs to the MurB family. FAD is required as a cofactor.

The protein localises to the cytoplasm. It carries out the reaction UDP-N-acetyl-alpha-D-muramate + NADP(+) = UDP-N-acetyl-3-O-(1-carboxyvinyl)-alpha-D-glucosamine + NADPH + H(+). Its pathway is cell wall biogenesis; peptidoglycan biosynthesis. Its function is as follows. Cell wall formation. In Bartonella bacilliformis (strain ATCC 35685 / KC583 / Herrer 020/F12,63), this protein is UDP-N-acetylenolpyruvoylglucosamine reductase.